A 578-amino-acid chain; its full sequence is Phosphoenolpyruvate-protein phosphotransferase (578 aa).

The active-site Tele-phosphohistidine intermediate is the histidine 195. 2 residues coordinate phosphoenolpyruvate: arginine 302 and arginine 338. Mg(2+)-binding residues include glutamate 437 and aspartate 461. Phosphoenolpyruvate contacts are provided by residues 460-461 (ND) and arginine 471. Cysteine 508 functions as the Proton donor in the catalytic mechanism.

It belongs to the PEP-utilizing enzyme family. In terms of assembly, homodimer. Requires Mg(2+) as cofactor.

The protein localises to the cytoplasm. The catalysed reaction is L-histidyl-[protein] + phosphoenolpyruvate = N(pros)-phospho-L-histidyl-[protein] + pyruvate. In terms of biological role, general (non sugar-specific) component of the phosphoenolpyruvate-dependent sugar phosphotransferase system (sugar PTS). This major carbohydrate active-transport system catalyzes the phosphorylation of incoming sugar substrates concomitantly with their translocation across the cell membrane. Enzyme I transfers the phosphoryl group from phosphoenolpyruvate (PEP) to the phosphoryl carrier protein (HPr). In Bacillus sp. (strain S), this protein is Phosphoenolpyruvate-protein phosphotransferase (ptsI).